A 252-amino-acid chain; its full sequence is ATP synthase subunit a (252 aa).

6 helical membrane-spanning segments follow: residues 29–49 (FTNVSLFTVVTVVITAAFLFI), 87–107 (FFPLVFSLFTFILVANFIGLF), 117–137 (IMITFSLAMVVILTVIGYGFY), 146–166 (LFVPSGVPVVVLPLVTMIEII), 196–216 (FIVSMIGVGIVGVGGAVLPLI), and 219–239 (VAITALEFLVAFLQAYVFTVL).

This sequence belongs to the ATPase A chain family. F-type ATPases have 2 components, CF(1) - the catalytic core - and CF(0) - the membrane proton channel. CF(1) has five subunits: alpha(3), beta(3), gamma(1), delta(1), epsilon(1). CF(0) has three main subunits: a(1), b(2) and c(9-12). The alpha and beta chains form an alternating ring which encloses part of the gamma chain. CF(1) is attached to CF(0) by a central stalk formed by the gamma and epsilon chains, while a peripheral stalk is formed by the delta and b chains.

The protein localises to the cell inner membrane. Its function is as follows. Key component of the proton channel; it plays a direct role in the translocation of protons across the membrane. The polypeptide is ATP synthase subunit a (Bartonella tribocorum (strain CIP 105476 / IBS 506)).